The sequence spans 457 residues: Proline-specific permease ProY (457 aa).

Topologically, residues 1 to 17 (MESKNKLKRGLSTRHIR) are cytoplasmic. Helical transmembrane passes span 18-38 (FMAL…DAIK) and 39-59 (MAGP…YIIM). Over 60-84 (RALGEMSVHNPAASSFSRYAQENLG) the chain is Cytoplasmic. The chain crosses the membrane as a helical span at residues 85–105 (PLAGYITGWTYCFEILIVAIA). At 106–113 (DVTAFGIY) the chain is on the periplasmic side. A helical transmembrane segment spans residues 114–134 (MGVWFPTVPHWIWVLSVVLII). Over 135–156 (CAVNLMSVKVFGELEFWFSFFK) the chain is Cytoplasmic. A helical transmembrane segment spans residues 157–177 (VATIIIMIVAGFGIIIWGIGN). Residues 178–197 (GGQPTGIHNLWSNGGFFSNG) lie on the Periplasmic side of the membrane. The helical transmembrane segment at 198–218 (WLGMVMSLQMVMFAYGGIEII) threads the bilayer. Over 219–242 (GITAGEAKDPEKSIPRAINSVPMR) the chain is Cytoplasmic. Residues 243–263 (ILVFYVGTLFVIMSIYPWNQV) traverse the membrane as a helical segment. Residues 264 to 277 (GTAGSPFVLTFQHM) lie on the Periplasmic side of the membrane. The helical transmembrane segment at 278–298 (GITFAASILNFVVLTASLSAI) threads the bilayer. Residues 299-331 (NSDVFGVGRMLHGMAEQGSAPKIFSKTSRRGIP) lie on the Cytoplasmic side of the membrane. A helical membrane pass occupies residues 332–352 (WVTVLVMTTALLFAVYLNYIM). Residues 353–355 (PEN) are Periplasmic-facing. A helical transmembrane segment spans residues 356–376 (VFLVIASLATFATVWVWIMIL). Over 377-399 (LSQIAFRRRLPPEEVKALKFKVP) the chain is Cytoplasmic. Residues 400–420 (GGVATTIGGLIFLLFIIGLIG) traverse the membrane as a helical segment. The Periplasmic segment spans residues 421–424 (YHPD). Residues 425 to 445 (TRISLYVGFAWIVVLLIGWMF) traverse the membrane as a helical segment. Topologically, residues 446–457 (KRRHDRQLAENQ) are cytoplasmic.

The protein belongs to the amino acid-polyamine-organocation (APC) superfamily. Amino acid transporter (AAT) (TC 2.A.3.1) family.

The protein resides in the cell inner membrane. In terms of biological role, permease that is involved in the transport across the cytoplasmic membrane of proline. This is Proline-specific permease ProY (proY) from Escherichia coli O157:H7.